The primary structure comprises 57 residues: UPF0391 membrane protein AZOSEA39630 (57 aa).

A run of 2 helical transmembrane segments spans residues 4–24 (WAII…TGVA) and 37–57 (IALA…VLVF).

Belongs to the UPF0391 family.

It localises to the cell membrane. The sequence is that of UPF0391 membrane protein AZOSEA39630 from Aromatoleum aromaticum (strain DSM 19018 / LMG 30748 / EbN1) (Azoarcus sp. (strain EbN1)).